Consider the following 3722-residue polypeptide: Vitelline envelope sperm lysin receptor (3722 aa).

The signal sequence occupies residues 1-24 (MSGMQWSFGFSCLFFLKTVWICQA). Residues 25-3698 (FDADTPDPRV…TPSTDMATVQ (3674 aa)) lie on the Extracellular side of the membrane. Intrachain disulfides connect C43–C141 and C72–C104. One copy of the VERL 1 repeat lies at 77 to 155 (MQMTRGRGIN…SQASNAPEPK (79 aa)). N-linked (GlcNAc...) asparagine glycosylation is found at N115, N122, and N142. The disordered stretch occupies residues 146-169 (SQASNAPEPKASPTSSTPQPEAAS). A compositionally biased stretch (polar residues) spans 157-169 (SPTSSTPQPEAAS). N-linked (GlcNAc...) asparagine glycosylation is present at N171. Disulfide bonds link C182/C280 and C211/C243. The VERL 2 repeat unit spans residues 216–293 (VPITHEHGFN…KSPDAPKPES (78 aa)). N-linked (GlcNAc...) asparagine glycosylation occurs at N254. Residues 279–335 (QCYMPKSPDAPKPESCLSSPPEPEASPSSNAPEPETYPTSSAPEKVSSDQPAPSHNQ) form a disordered region. A compositionally biased stretch (low complexity) spans 291–312 (PESCLSSPPEPEASPSSNAPEP). The span at 315–335 (YPTSSAPEKVSSDQPAPSHNQ) shows a compositional bias: polar residues. Residues N334 and N373 are each glycosylated (N-linked (GlcNAc...) asparagine). Cystine bridges form between C345/C443 and C374/C406. A VERL 3 repeat occupies 379 to 455 (VPITQEFGIN…PKSPVAPKPE (77 aa)). N-linked (GlcNAc...) asparagine glycosylation is found at N417, N438, N487, N501, N526, N570, N591, N640, N654, N679, N723, N744, N793, N807, N832, N876, N897, N946, N960, N985, N1029, N1050, N1099, N1113, N1138, N1182, N1203, N1252, N1266, N1291, N1335, N1356, N1405, N1419, N1443, and N1487. The segment at 443–488 (CYMPKSPVAPKPETGPTSNAPEPETYPTSSAPEKVSSDQPAPSHNQ) is disordered. Over residues 457 to 488 (GPTSNAPEPETYPTSSAPEKVSSDQPAPSHNQ) the composition is skewed to polar residues. A VERL 4 repeat occupies 532–608 (VPITQEFGIN…PKSPVAPKPE (77 aa)). The segment at 603-641 (VAPKPETGPTSNAPEPETYPTSSAPEKVSSDQPAPSHNQ) is disordered. Polar residues predominate over residues 610–641 (GPTSNAPEPETYPTSSAPEKVSSDQPAPSHNQ). One copy of the VERL 5 repeat lies at 685-761 (VPITQEFGIN…PKSPVAPKPE (77 aa)). Residues 756-794 (VAPKPETGPSSNAPEPETYPTSSAPEKVSSDQPAPSHNQ) form a disordered region. The span at 763–794 (GPSSNAPEPETYPTSSAPEKVSSDQPAPSHNQ) shows a compositional bias: polar residues. Residues 838–914 (VPITQEFGIN…PKSPVAPKPE (77 aa)) form a VERL 6 repeat. Residues 909-947 (VAPKPETGPTSNAPEPETYPTSSAPEKVSSDQPAPSHNQ) form a disordered region. The segment covering 916–947 (GPTSNAPEPETYPTSSAPEKVSSDQPAPSHNQ) has biased composition (polar residues). A VERL 7 repeat occupies 991-1067 (VPITHEFGIN…PKSPVAPKPE (77 aa)). A disordered region spans residues 1062–1100 (VAPKPETGPTSNAPEPETYPTSSAPEKVSSDQPAPSHNQ). The segment covering 1069-1100 (GPTSNAPEPETYPTSSAPEKVSSDQPAPSHNQ) has biased composition (polar residues). The stretch at 1144-1220 (VPITQEFGIN…PKSPVAPKPE (77 aa)) is one VERL 8 repeat. The segment at 1215–1253 (VAPKPETGPTSNAPEPETYPTSSAPEKVSSDQPAPSHNQ) is disordered. Residues 1222–1253 (GPTSNAPEPETYPTSSAPEKVSSDQPAPSHNQ) show a composition bias toward polar residues. A VERL 9 repeat occupies 1297 to 1373 (VPITHKFGIN…PKSPVAHKPE (77 aa)). The tract at residues 1368 to 1406 (VAHKPETGPTSNAPEPETYPTSSAPEKVSSDQPAPSHNQ) is disordered. A compositionally biased stretch (polar residues) spans 1375–1406 (GPTSNAPEPETYPTSSAPEKVSSDQPAPSHNQ). A VERL 10 repeat occupies 1449-1525 (VPITHEFGIN…PKSPVAPKPE (77 aa)). A disordered region spans residues 1519 to 1556 (PVAPKPETGPSSNAPEPETYPTSSAPEKVYSDQPAPSH). Over residues 1527–1543 (GPSSNAPEPETYPTSSA) the composition is skewed to polar residues. N1557, N1571, N1596, N1640, N1661, N1710, N1724, N1749, N1793, N1814, N1863, N1877, N1902, N1946, N1967, N2016, N2030, N2055, N2099, N2120, N2169, N2183, N2208, N2252, N2273, N2322, N2336, N2361, N2405, N2426, N2475, N2489, N2514, N2558, N2579, N2628, N2642, N2667, N2711, N2732, N2781, N2795, N2820, N2864, N2885, N2934, N2948, N2973, N3017, N3038, N3087, N3101, N3126, N3170, N3191, N3229, N3243, N3268, N3312, and N3333 each carry an N-linked (GlcNAc...) asparagine glycan. Residues 1602–1678 (VPITHEFGIN…PKSPVAPKPE (77 aa)) form a VERL 11 repeat. The segment at 1672–1711 (PVAPKPETGPTSNAPEPQTYPTSSAPEKVSSDQPAPSHNQ) is disordered. Polar residues predominate over residues 1680–1711 (GPTSNAPEPQTYPTSSAPEKVSSDQPAPSHNQ). A VERL 12 repeat occupies 1755–1831 (VPITQEFGIN…PKSPVAPKPE (77 aa)). Positions 1826–1864 (VAPKPETGPTSNAPEPETYPTSSAPEKVSSDQPAPSHNQ) are disordered. Polar residues predominate over residues 1833–1864 (GPTSNAPEPETYPTSSAPEKVSSDQPAPSHNQ). A VERL 13 repeat occupies 1908 to 1984 (VPITHEFGIN…PKSPVAPKPE (77 aa)). The segment at 1979–2017 (VAPKPETGPTSNAPEPETYPTSSAPEKVSSDQPAPSHNQ) is disordered. The span at 1986–2017 (GPTSNAPEPETYPTSSAPEKVSSDQPAPSHNQ) shows a compositional bias: polar residues. Residues 2061 to 2137 (VPITQEFGIN…PKSPVAPKPE (77 aa)) form a VERL 14 repeat. Residues 2132–2170 (VAPKPETGPTSNAPEPETYPTSSAPEKVSSDQPAPSHNQ) are disordered. A compositionally biased stretch (polar residues) spans 2139 to 2170 (GPTSNAPEPETYPTSSAPEKVSSDQPAPSHNQ). A VERL 15 repeat occupies 2214–2290 (VPITQEFGIN…PKSPVAPKPE (77 aa)). The disordered stretch occupies residues 2285-2323 (VAPKPETGPTSNAPEPETYPTSSAPEKVSSDQPAPSHNQ). Over residues 2292-2323 (GPTSNAPEPETYPTSSAPEKVSSDQPAPSHNQ) the composition is skewed to polar residues. The VERL 16 repeat unit spans residues 2367 to 2443 (VPITQEFGIN…PKSPVAPKPE (77 aa)). The interval 2438–2476 (VAPKPETGPTSNAPEPETYPTSSAPEKVSSDQPAPSHNQ) is disordered. Residues 2445 to 2476 (GPTSNAPEPETYPTSSAPEKVSSDQPAPSHNQ) are compositionally biased toward polar residues. One copy of the VERL 17 repeat lies at 2520 to 2596 (VPITQEFGIN…PKSPVAPKPE (77 aa)). The segment at 2590-2629 (PVAPKPETGPTSNAPEPQTYPTSSAPEKVSSDQPAPSHNQ) is disordered. Over residues 2598 to 2629 (GPTSNAPEPQTYPTSSAPEKVSSDQPAPSHNQ) the composition is skewed to polar residues. A VERL 18 repeat occupies 2673-2749 (VPITQEFGIN…PKSPVAPKPE (77 aa)). The tract at residues 2744–2782 (VAPKPETGPTSNAPEPETYPTSSAPEKVSSDQPAPSHNQ) is disordered. Residues 2751 to 2782 (GPTSNAPEPETYPTSSAPEKVSSDQPAPSHNQ) are compositionally biased toward polar residues. One copy of the VERL 19 repeat lies at 2826-2902 (VPITHEFGIN…PKSPVAPKPE (77 aa)). The tract at residues 2897–2935 (VAPKPETGPTSNAPEPQTYPTSSAPEKVSSDQPAPSHNQ) is disordered. Positions 2904–2935 (GPTSNAPEPQTYPTSSAPEKVSSDQPAPSHNQ) are enriched in polar residues. The VERL 20 repeat unit spans residues 2979 to 3055 (VPITQEFGIN…PKSPVAPKPE (77 aa)). Residues 3050–3088 (VAPKPETGPTSNAPEPETYPTSSAPEKVSSDQPAPSHNQ) form a disordered region. Residues 3057 to 3088 (GPTSNAPEPETYPTSSAPEKVSSDQPAPSHNQ) are compositionally biased toward polar residues. A VERL 21 repeat occupies 3132–3208 (VPITQEFGIN…PKSPVAPKPE (77 aa)). Residues 3205-3230 (PKPETYPTSSAPEKVSSDQPAPSHNQ) are disordered. Positions 3210–3230 (YPTSSAPEKVSSDQPAPSHNQ) are enriched in polar residues. One copy of the VERL 22 repeat lies at 3274 to 3351 (VPITHEFGIN…KSPVAPKPEA (78 aa)). The interval 3345–3407 (VAPKPEASPT…RKSNQTTSTE (63 aa)) is disordered. Polar residues predominate over residues 3352–3375 (SPTSNAPEPQTYPTSSAPGTSPEG). N-linked (GlcNAc...) asparagine glycosylation is found at N3388, N3401, N3449, N3456, N3559, and N3650. The ZP domain maps to 3408-3670 (DVLDDTSNYI…SSCSNQRRTR (263 aa)). Residues 3699-3719 (VALLVAVALLITQLAGLAIYV) form a helical membrane-spanning segment. The Cytoplasmic segment spans residues 3720–3722 (NIN).

As to quaternary structure, may form disulfide-linked homodimers. Interacts (via VERL repeats) with sperm lysin. Each VERL chain can bind numerous lysin molecules. In terms of processing, N-glycosylated. About half of the glycoprotein mass corresponds to carbohydrate chains. N-glycosylation is not required for lysin binding. Post-translationally, O-glycosylated. O-glycosylation is not required for lysin binding.

The protein resides in the cell membrane. It localises to the secreted. The protein localises to the extracellular space. It is found in the extracellular matrix. Structural component of the egg vitelline envelope; forms long filaments. Functions as a species-specific receptor for the sperm protein lysin; prevents fertilization by sperm from other species. Each VERL chain can bind multiple copies of the sperm protein lysin; this creates a 3 um hole in the egg vitelline envelope through which the sperm passes. The polypeptide is Vitelline envelope sperm lysin receptor (Haliotis rufescens (California red abalone)).